The following is a 394-amino-acid chain: Elongation factor Tu 1 (394 aa).

In terms of domain architecture, tr-type G spans 10–204 (KPHVNVGTIG…ALDTYIPEPA (195 aa)). The interval 19-26 (GHVDHGKT) is G1. Position 19-26 (19-26 (GHVDHGKT)) interacts with GTP. T26 is a Mg(2+) binding site. The interval 60–64 (GITIN) is G2. The G3 stretch occupies residues 81–84 (DCPG). Residues 81 to 85 (DCPGH) and 136 to 139 (NKCD) contribute to the GTP site. Residues 136-139 (NKCD) form a G4 region. The interval 174–176 (SAL) is G5.

The protein belongs to the TRAFAC class translation factor GTPase superfamily. Classic translation factor GTPase family. EF-Tu/EF-1A subfamily. As to quaternary structure, monomer.

It localises to the cytoplasm. It carries out the reaction GTP + H2O = GDP + phosphate + H(+). Functionally, GTP hydrolase that promotes the GTP-dependent binding of aminoacyl-tRNA to the A-site of ribosomes during protein biosynthesis. The polypeptide is Elongation factor Tu 1 (Shewanella frigidimarina (strain NCIMB 400)).